The sequence spans 377 residues: DNA-directed RNA polymerase subunit alpha (377 aa).

The alpha N-terminal domain (alpha-NTD) stretch occupies residues 1 to 259 (MSDSSHNLLY…KHFSVFEKMD (259 aa)). The alpha C-terminal domain (alpha-CTD) stretch occupies residues 276–377 (KDDILHKLVL…KIRSSKNTKG (102 aa)).

This sequence belongs to the RNA polymerase alpha chain family. As to quaternary structure, homodimer. The RNAP catalytic core consists of 2 alpha, 1 beta, 1 beta' and 1 omega subunit. When a sigma factor is associated with the core the holoenzyme is formed, which can initiate transcription.

It carries out the reaction RNA(n) + a ribonucleoside 5'-triphosphate = RNA(n+1) + diphosphate. Its function is as follows. DNA-dependent RNA polymerase catalyzes the transcription of DNA into RNA using the four ribonucleoside triphosphates as substrates. This is DNA-directed RNA polymerase subunit alpha from Chlamydia trachomatis serovar D (strain ATCC VR-885 / DSM 19411 / UW-3/Cx).